The following is a 137-amino-acid chain: MQRTLVLIKPDAFERSLVAEIMGRIEKKNFKIVSMKFWSKAPRNLIEQHYKEHSEQSYFNDNCDFMVSGPIISIVYEGTDAISKIRRLQGNILTPGTIRGDLANDIRENLIHASDSEDSAVDEISIWFPETKMETDN.

The ATP site is built by K9, Y58, R86, R99, and N109. H112 acts as the Pros-phosphohistidine intermediate in catalysis.

It belongs to the NDK family. Mg(2+) is required as a cofactor.

The enzyme catalyses a 2'-deoxyribonucleoside 5'-diphosphate + ATP = a 2'-deoxyribonucleoside 5'-triphosphate + ADP. It catalyses the reaction a ribonucleoside 5'-diphosphate + ATP = a ribonucleoside 5'-triphosphate + ADP. Functionally, plays a role in the synthesis of nucleoside triphosphates. This activity may optimize the replication of the AT-rich (73%) viral genome in a thymidine-limited host environment. The chain is Nucleoside diphosphate kinase (NDK) from Acanthamoeba polyphaga (Amoeba).